The chain runs to 2030 residues: Dedicator of cytokinesis protein 3 (2030 aa).

Residues 6-67 (EEEKYGVVIC…PANYIHLKKA (62 aa)) form the SH3 domain. The C2 DOCK-type domain occupies 421–599 (RNDLYLTLEK…ESFFISTQLS (179 aa)). Residues 1228-1635 (KSEINKEEMY…LYHEFPGLDK (408 aa)) form the DOCKER domain. Disordered stretches follow at residues 1641–1662 (SGTS…PESI), 1734–1771 (SSSQ…SLPD), 1849–1927 (DTPP…ADED), and 1951–2030 (QPCR…RGEQ). Serine 1658 is modified (phosphoserine). The segment covering 1734-1754 (SSSQASPSSSSLSSTHSAPSQ) has biased composition (low complexity). The segment covering 1755–1765 (MITSAPSSARG) has biased composition (polar residues). The segment covering 1880–1902 (GSNSTLSGSASSGVSSLSESNFG) has biased composition (low complexity). Over residues 1967 to 1977 (PMDPPALPPKP) the composition is skewed to pro residues. An SH3-binding motif is present at residues 1970 to 1976 (PPALPPK). 2 stretches are compositionally biased toward basic and acidic residues: residues 1984–2001 (ALEH…ERPR) and 2014–2030 (AKEE…RGEQ).

The protein belongs to the DOCK family. In terms of assembly, interacts with presenilin proteins PSEN1 and PSEN2. Interacts with CRK. In terms of tissue distribution, in normal brains, it is localized in the neuropil, and occasionally in the pyramidal cells, while in Alzheimer disease brains, it is associated with neurofibrillary tangles.

The protein localises to the cytoplasm. Functionally, potential guanine nucleotide exchange factor (GEF). GEF proteins activate some small GTPases by exchanging bound GDP for free GTP. Its interaction with presenilin proteins as well as its ability to stimulate Tau/MAPT phosphorylation suggest that it may be involved in Alzheimer disease. Ectopic expression in nerve cells decreases the secretion of amyloid-beta APBA1 protein and lowers the rate of cell-substratum adhesion, suggesting that it may affect the function of some small GTPase involved in the regulation of actin cytoskeleton or cell adhesion receptors. This Homo sapiens (Human) protein is Dedicator of cytokinesis protein 3 (DOCK3).